A 118-amino-acid chain; its full sequence is Large ribosomal subunit protein uL18 (118 aa).

The segment at 1–24 (MITKPDKNKIRQKRHRRVRGKLSG) is disordered. A compositionally biased stretch (basic residues) spans 10 to 20 (IRQKRHRRVRG).

The protein belongs to the universal ribosomal protein uL18 family. As to quaternary structure, part of the 50S ribosomal subunit; part of the 5S rRNA/L5/L18/L25 subcomplex. Contacts the 5S and 23S rRNAs.

Its function is as follows. This is one of the proteins that bind and probably mediate the attachment of the 5S RNA into the large ribosomal subunit, where it forms part of the central protuberance. The chain is Large ribosomal subunit protein uL18 from Streptococcus sanguinis (strain SK36).